The chain runs to 408 residues: MLHPKLGRVMNVVYYHSVVFALMSTTLRIRSCRKCLRLEKVSRTYTIYSFFVGIFLFLNLYFMVPRIMEDGYMKYNIVLQWNFFVMLFLRAIAVVSCYGTLWLKRHKIIQLYKYSLIYWKRFGHITRAIVDKKELLDLQESLARIMIRKIILLYSAFLCSTVLQYQLLSVINPQIFLAFCARLTHFLHFLCVKMGFFGVLVLLNHQFLVIHLAINALHGRKARKKWKALRSVAAMHLKTLRLARRIFDMFDIANATVFINMFMTAINILYHAVQYSNSSIKSNGWGILFGNGLIVFNFWGTMALMEMLDSVVTSCNNTGQQLRQLSDLPKVGPKMQRELDVFTMQLRQNRLVYKICGIVELDKPACLSYIGSILSNVIILMQFDLRRQRQPINDRQYLIHLMKNKTKV.

Over 1 to 44 (MLHPKLGRVMNVVYYHSVVFALMSTTLRIRSCRKCLRLEKVSRT) the chain is Cytoplasmic. The helical transmembrane segment at 45–65 (YTIYSFFVGIFLFLNLYFMVP) threads the bilayer. The Extracellular segment spans residues 66–82 (RIMEDGYMKYNIVLQWN). Residues 83-103 (FFVMLFLRAIAVVSCYGTLWL) traverse the membrane as a helical segment. Residues 104-150 (KRHKIIQLYKYSLIYWKRFGHITRAIVDKKELLDLQESLARIMIRKI) lie on the Cytoplasmic side of the membrane. A helical transmembrane segment spans residues 151-171 (ILLYSAFLCSTVLQYQLLSVI). At 172–193 (NPQIFLAFCARLTHFLHFLCVK) the chain is on the extracellular side. A helical membrane pass occupies residues 194-214 (MGFFGVLVLLNHQFLVIHLAI). Residues 215–245 (NALHGRKARKKWKALRSVAAMHLKTLRLARR) lie on the Cytoplasmic side of the membrane. A helical membrane pass occupies residues 246 to 266 (IFDMFDIANATVFINMFMTAI). Residues 267–284 (NILYHAVQYSNSSIKSNG) are Extracellular-facing. N277 carries an N-linked (GlcNAc...) asparagine glycan. Residues 285–305 (WGILFGNGLIVFNFWGTMALM) traverse the membrane as a helical segment. Topologically, residues 306–364 (EMLDSVVTSCNNTGQQLRQLSDLPKVGPKMQRELDVFTMQLRQNRLVYKICGIVELDKP) are cytoplasmic. The helical transmembrane segment at 365-385 (ACLSYIGSILSNVIILMQFDL) threads the bilayer. At 386 to 408 (RRQRQPINDRQYLIHLMKNKTKV) the chain is on the extracellular side. N404 carries an N-linked (GlcNAc...) asparagine glycan.

It belongs to the insect chemoreceptor superfamily. Gustatory receptor (GR) family. Gr22e subfamily. As to expression, expressed in the adult labellar chemosensory neurons, labral sense organ and thorax. In larvae, is in neurons of the terminal external chemosensory organ as well as in the dorsal pharyngeal sense organ.

It localises to the cell membrane. Probable gustatory receptor which mediates acceptance or avoidance behavior, depending on its substrates. This Drosophila melanogaster (Fruit fly) protein is Putative gustatory receptor 58b (Gr58b).